Here is a 324-residue protein sequence, read N- to C-terminus: Quinolinate synthase (324 aa).

2 residues coordinate iminosuccinate: His44 and Ser62. Cys107 contacts [4Fe-4S] cluster. Residues 133-135 and Ser150 contribute to the iminosuccinate site; that span reads YVN. Residue Cys192 participates in [4Fe-4S] cluster binding. Iminosuccinate is bound by residues 218-220 and Thr235; that span reads HPE. Cys278 is a [4Fe-4S] cluster binding site.

This sequence belongs to the quinolinate synthase family. Type 2 subfamily. [4Fe-4S] cluster is required as a cofactor.

The protein resides in the cytoplasm. The enzyme catalyses iminosuccinate + dihydroxyacetone phosphate = quinolinate + phosphate + 2 H2O + H(+). It participates in cofactor biosynthesis; NAD(+) biosynthesis; quinolinate from iminoaspartate: step 1/1. Its function is as follows. Catalyzes the condensation of iminoaspartate with dihydroxyacetone phosphate to form quinolinate. This is Quinolinate synthase from Leptospira interrogans serogroup Icterohaemorrhagiae serovar copenhageni (strain Fiocruz L1-130).